The primary structure comprises 697 residues: Polyribonucleotide nucleotidyltransferase (697 aa).

Positions 487 and 493 each coordinate Mg(2+). Residues 554–613 (PRIETIQIKPSKIAVVIGPGGKQIRAIIEQTGVQIDIDDTGLVNIAAIDLVSIEKAKAII) form the KH domain. Positions 623 to 691 (GRIYSGKAIS…ERGQIKLSRK (69 aa)) constitute an S1 motif domain.

It belongs to the polyribonucleotide nucleotidyltransferase family. It depends on Mg(2+) as a cofactor.

The protein localises to the cytoplasm. The catalysed reaction is RNA(n+1) + phosphate = RNA(n) + a ribonucleoside 5'-diphosphate. In terms of biological role, involved in mRNA degradation. Catalyzes the phosphorolysis of single-stranded polyribonucleotides processively in the 3'- to 5'-direction. The chain is Polyribonucleotide nucleotidyltransferase from Protochlamydia amoebophila (strain UWE25).